Consider the following 803-residue polypeptide: Translation initiation factor IF-2 (803 aa).

2 disordered regions span residues 95 to 125 (PVVE…EKAE) and 138 to 178 (EVKE…EREE). The span at 111–121 (VPLTSDTTNLN) shows a compositional bias: polar residues. Over residues 138-155 (EVKEEAKKTPSEKKETPK) the composition is skewed to basic and acidic residues. Residues 156-167 (KGPRKETRRSRK) show a composition bias toward basic residues. Over residues 168–178 (PDKEDKWEREE) the composition is skewed to basic and acidic residues. A tr-type G domain is found at 302–471 (PRAPVVTIMG…LLQAEVLELK (170 aa)). The G1 stretch occupies residues 311-318 (GHVDHGKT). GTP is bound at residue 311 to 318 (GHVDHGKT). A G2 region spans residues 336–340 (GITQH). Positions 357 to 360 (DTPG) are G3. Residues 357 to 361 (DTPGH) and 411 to 414 (NKID) each bind GTP. The interval 411 to 414 (NKID) is G4. The G5 stretch occupies residues 447–449 (SAK).

It belongs to the TRAFAC class translation factor GTPase superfamily. Classic translation factor GTPase family. IF-2 subfamily.

The protein resides in the cytoplasm. In terms of biological role, one of the essential components for the initiation of protein synthesis. Protects formylmethionyl-tRNA from spontaneous hydrolysis and promotes its binding to the 30S ribosomal subunits. Also involved in the hydrolysis of GTP during the formation of the 70S ribosomal complex. The sequence is that of Translation initiation factor IF-2 from Coxiella burnetii (strain RSA 331 / Henzerling II).